The sequence spans 383 residues: MKNKLPPFIEIYRALIATPSISATEEALDQSNADLITLLADWFKDLGFNVEVQPVPGTRNKFNMLASCGQGAGGLLLAGHTDTVPFDDGRWTRDPFTLTEHDGKLYGLGTADMKGFFAFILDALRDVDVTKLKKPLYILATADEETSMAGARYFAETTALRPDCAIIGEPTSLQPVRAHKGHISNAIRIQGQSGHSSDPARGVNAIELMHDAIGHILQLRDNLKERYHYDAFTVPYPTLNLGHIHGGDASNRICACCELHMDIRPLPGMTLNELNGLLNDALAPVSERWPGRLTVDELHPPIPGYECPPNHQLVEVVEKLLGAKTEVVNYCTEAPFIQTLCPTLVLGPGSINQAHQPDEYLETRFIKPTRELITQVIHHFCWH.

Residue His80 coordinates Zn(2+). Asp82 is a catalytic residue. Asp112 serves as a coordination point for Zn(2+). The active site involves Glu144. Zn(2+) contacts are provided by Glu145, Glu169, and His355.

Belongs to the peptidase M20A family. ArgE subfamily. As to quaternary structure, homodimer. Zn(2+) is required as a cofactor. It depends on Co(2+) as a cofactor. Requires glutathione as cofactor.

The protein localises to the cytoplasm. The enzyme catalyses N(2)-acetyl-L-ornithine + H2O = L-ornithine + acetate. It functions in the pathway amino-acid biosynthesis; L-arginine biosynthesis; L-ornithine from N(2)-acetyl-L-ornithine (linear): step 1/1. Functionally, catalyzes the hydrolysis of the amide bond of N(2)-acetylated L-amino acids. Cleaves the acetyl group from N-acetyl-L-ornithine to form L-ornithine, an intermediate in L-arginine biosynthesis pathway, and a branchpoint in the synthesis of polyamines. The protein is Acetylornithine deacetylase of Escherichia coli O17:K52:H18 (strain UMN026 / ExPEC).